Reading from the N-terminus, the 315-residue chain is Transcription antitermination protein NusB (315 aa).

The interval 296–315 (SANFDTKSAELNDADEKSQD) is disordered. Residues 302 to 315 (KSAELNDADEKSQD) are compositionally biased toward basic and acidic residues.

It belongs to the NusB family.

Functionally, involved in transcription antitermination. Required for transcription of ribosomal RNA (rRNA) genes. Binds specifically to the boxA antiterminator sequence of the ribosomal RNA (rrn) operons. This Psychrobacter cryohalolentis (strain ATCC BAA-1226 / DSM 17306 / VKM B-2378 / K5) protein is Transcription antitermination protein NusB.